We begin with the raw amino-acid sequence, 360 residues long: Cyclin-D1-binding protein 1 (360 aa).

Ala2 carries the post-translational modification N-acetylalanine. 2 interaction with TCF3 regions span residues Ala2–Val184 and Ile150–Leu360. Interaction with RPLP0 stretches follow at residues Ala2–Glu190 and Leu240–Leu360. The interval Ala2–Thr208 is required for interaction with CCND1.

The protein belongs to the CCNDBP1 family. In terms of assembly, interacts with CCND1 and GRAP2. May also interact with COPS5, RPLP0, SIRT6, SYF2 and TCF3. Post-translationally, phosphorylated. In terms of tissue distribution, ubiquitously expressed. Expression is down-regulated in a variety of tumor types including breast, colon, prostate and rectal tumors, and is up-regulated in certain hepatic carcinomas.

It is found in the cytoplasm. Its subcellular location is the nucleus. In terms of biological role, may negatively regulate cell cycle progression. May act at least in part via inhibition of the cyclin-D1/CDK4 complex, thereby preventing phosphorylation of RB1 and blocking E2F-dependent transcription. The protein is Cyclin-D1-binding protein 1 (CCNDBP1) of Homo sapiens (Human).